The chain runs to 105 residues: MDKFYNYNSSSHQALLSFKVKPNSKQNLISNFVIINNIPYLKLSIKAIPEQGKANEEIINYLAKEWKLSRSNIEIIKGHTHSLKTILIKNINEDYLNWIINSYIK.

The protein belongs to the UPF0235 family.

The protein is UPF0235 protein RPR_04990 of Rickettsia peacockii (strain Rustic).